The chain runs to 218 residues: Cytidylate kinase (218 aa).

ATP is bound at residue 21 to 29 (GPAASGKGT).

It belongs to the cytidylate kinase family. Type 1 subfamily.

It localises to the cytoplasm. It catalyses the reaction CMP + ATP = CDP + ADP. The enzyme catalyses dCMP + ATP = dCDP + ADP. The chain is Cytidylate kinase from Rickettsia canadensis (strain McKiel).